Consider the following 205-residue polypeptide: Enhancer of split mgamma protein (205 aa).

The 58-residue stretch at 15–72 (YRKVMKPMLERKRRARINKCLDELKDLMVATLESEGEHVTRLEKADILELTVTHLQKM) folds into the bHLH domain. The region spanning 93 to 126 (FRSGYIHAVNEVSRSLSQLPGMNVSLGTQLMTHL) is the Orange domain. The short motif at 202 to 205 (WRPW) is the WRPW motif element.

As to quaternary structure, homodimer. Heterodimer with dpn. Might form higher-order oligomers. Transcription repression requires formation of a complex with a corepressor protein (Groucho). Expressed in sensory organ precursors in the wing, leg and eye imaginal disk.

It is found in the nucleus. Functionally, transcriptional repressor of genes that require a bHLH protein for their transcription. May serve as a transcriptional regulator of the Achaete-scute complex (AS-C) genes. Contributes to the neural-epidermal lineage decision during early neurogenesis. Part of the Notch signaling pathway, plays a role in neuroblasts proliferation in embryos and larvae. In the larval brain, together with other self-renewal transcriptional repressors such as klu and dpn, required for type II neuroblast self-renewal and for maintaining erm in an inactive state in intermediate neural progenitors (INP) derived from type II neuroblasts. The chain is Enhancer of split mgamma protein from Drosophila melanogaster (Fruit fly).